A 309-amino-acid chain; its full sequence is MNKDHTLYCSVYIRNAFFSEIGIGISANSCLLLFHTFMFIRGHRPRLTDLPIGFVALIHLVMLLLAAYITEDFFMSSGGWDDITCKLVIFLHRFFRSLSVCATCLLSVFQAIILCPQSSHLAKLKQNSPHQLSYFFIFLSIFYTSISSHILIAAIPTQNITFVNLIYITNSCSFLPLSSSMQHTFSTLLAFRNVFVIGLMGLSTCYMATLLCRHKTRSQRLQNSKLSPKATPEQRALRTILMLMSFFLLMSTFDSIISYSRTILQGNPLPFCFQILVAHSYAAVSPLLVLSNEKRITNLLISMYEKIVL.

Residues 1 to 19 (MNKDHTLYCSVYIRNAFFS) lie on the Extracellular side of the membrane. The chain crosses the membrane as a helical span at residues 20 to 40 (EIGIGISANSCLLLFHTFMFI). Topologically, residues 41 to 49 (RGHRPRLTD) are cytoplasmic. A helical transmembrane segment spans residues 50–70 (LPIGFVALIHLVMLLLAAYIT). Residues 71–93 (EDFFMSSGGWDDITCKLVIFLHR) are Extracellular-facing. The cysteines at positions 85 and 172 are disulfide-linked. A helical membrane pass occupies residues 94–114 (FFRSLSVCATCLLSVFQAIIL). The Cytoplasmic portion of the chain corresponds to 115–134 (CPQSSHLAKLKQNSPHQLSY). Residues 135 to 155 (FFIFLSIFYTSISSHILIAAI) traverse the membrane as a helical segment. Over 156–187 (PTQNITFVNLIYITNSCSFLPLSSSMQHTFST) the chain is Extracellular. Residue Asn-159 is glycosylated (N-linked (GlcNAc...) asparagine). A helical membrane pass occupies residues 188–208 (LLAFRNVFVIGLMGLSTCYMA). The Cytoplasmic segment spans residues 209-238 (TLLCRHKTRSQRLQNSKLSPKATPEQRALR). The chain crosses the membrane as a helical span at residues 239 to 259 (TILMLMSFFLLMSTFDSIISY). Residues 260 to 268 (SRTILQGNP) are Extracellular-facing. Residues 269–289 (LPFCFQILVAHSYAAVSPLLV) traverse the membrane as a helical segment. The Cytoplasmic portion of the chain corresponds to 290–309 (LSNEKRITNLLISMYEKIVL).

This sequence belongs to the G-protein coupled receptor 1 family.

The protein localises to the cell membrane. Putative pheromone receptor implicated in the regulation of social and reproductive behavior. This is Vomeronasal type-1 receptor 52 (Vmn1r52) from Mus musculus (Mouse).